Here is a 1070-residue protein sequence, read N- to C-terminus: DNA-directed RNA polymerase subunit beta (1070 aa).

The protein belongs to the RNA polymerase beta chain family. In terms of assembly, in plastids the minimal PEP RNA polymerase catalytic core is composed of four subunits: alpha, beta, beta', and beta''. When a (nuclear-encoded) sigma factor is associated with the core the holoenzyme is formed, which can initiate transcription.

It is found in the plastid. The protein localises to the chloroplast. It carries out the reaction RNA(n) + a ribonucleoside 5'-triphosphate = RNA(n+1) + diphosphate. In terms of biological role, DNA-dependent RNA polymerase catalyzes the transcription of DNA into RNA using the four ribonucleoside triphosphates as substrates. This Populus alba (White poplar) protein is DNA-directed RNA polymerase subunit beta.